A 392-amino-acid polypeptide reads, in one-letter code: Lipid-A-disaccharide synthase (392 aa).

Belongs to the LpxB family.

The catalysed reaction is a lipid X + a UDP-2-N,3-O-bis[(3R)-3-hydroxyacyl]-alpha-D-glucosamine = a lipid A disaccharide + UDP + H(+). It participates in bacterial outer membrane biogenesis; LPS lipid A biosynthesis. In terms of biological role, condensation of UDP-2,3-diacylglucosamine and 2,3-diacylglucosamine-1-phosphate to form lipid A disaccharide, a precursor of lipid A, a phosphorylated glycolipid that anchors the lipopolysaccharide to the outer membrane of the cell. The sequence is that of Lipid-A-disaccharide synthase from Prochlorococcus marinus (strain MIT 9313).